Reading from the N-terminus, the 69-residue chain is Large ribosomal subunit protein uL29 (69 aa).

It belongs to the universal ribosomal protein uL29 family.

The chain is Large ribosomal subunit protein uL29 from Synechococcus sp. (strain CC9902).